A 105-amino-acid polypeptide reads, in one-letter code: Pyrimidine/purine nucleoside phosphorylase (105 aa).

It belongs to the nucleoside phosphorylase PpnP family.

The enzyme catalyses a purine D-ribonucleoside + phosphate = a purine nucleobase + alpha-D-ribose 1-phosphate. It carries out the reaction adenosine + phosphate = alpha-D-ribose 1-phosphate + adenine. It catalyses the reaction cytidine + phosphate = cytosine + alpha-D-ribose 1-phosphate. The catalysed reaction is guanosine + phosphate = alpha-D-ribose 1-phosphate + guanine. The enzyme catalyses inosine + phosphate = alpha-D-ribose 1-phosphate + hypoxanthine. It carries out the reaction thymidine + phosphate = 2-deoxy-alpha-D-ribose 1-phosphate + thymine. It catalyses the reaction uridine + phosphate = alpha-D-ribose 1-phosphate + uracil. The catalysed reaction is xanthosine + phosphate = alpha-D-ribose 1-phosphate + xanthine. Functionally, catalyzes the phosphorolysis of diverse nucleosides, yielding D-ribose 1-phosphate and the respective free bases. Can use uridine, adenosine, guanosine, cytidine, thymidine, inosine and xanthosine as substrates. Also catalyzes the reverse reactions. The chain is Pyrimidine/purine nucleoside phosphorylase from Anaeromyxobacter sp. (strain Fw109-5).